Reading from the N-terminus, the 205-residue chain is Thymidine kinase (205 aa).

Residues 9–16 (SAMNAGKS) and 87–90 (DECQ) each bind ATP. Glu-88 functions as the Proton acceptor in the catalytic mechanism. Residues Cys-145, Cys-147, Cys-182, and His-185 each contribute to the Zn(2+) site.

The protein belongs to the thymidine kinase family. In terms of assembly, homotetramer.

It localises to the cytoplasm. The enzyme catalyses thymidine + ATP = dTMP + ADP + H(+). With respect to regulation, allosteric enzyme which is feedback inhibited by dTTP and activated by a number of dNDP and dNTP. Functionally, phosphorylates both thymidine and deoxyuridine. The chain is Thymidine kinase from Escherichia coli O157:H7.